The chain runs to 221 residues: Ependymin-2 (221 aa).

The first 21 residues, 1 to 21 (MQDFAFAALSIWLCLGATALA), serve as a signal peptide directing secretion. Residues N33, N73, and N97 are each glycosylated (N-linked (GlcNAc...) asparagine).

It belongs to the ependymin family. Binds calcium through the terminal sialic acids. EPDs are synthesized in the meninx and secreted in the cerebrospinal fluid.

It is found in the secreted. Its function is as follows. May play a role in neural plasticity. May be involved during axon regeneration. This chain is Ependymin-2 (epd2), found in Oncorhynchus mykiss (Rainbow trout).